Here is a 129-residue protein sequence, read N- to C-terminus: L-ectoine synthase (129 aa).

Belongs to the ectoine synthase family.

The enzyme catalyses (2S)-4-acetamido-2-aminobutanoate = L-ectoine + H2O. It participates in amine and polyamine biosynthesis; ectoine biosynthesis; L-ectoine from L-aspartate 4-semialdehyde: step 3/3. Functionally, catalyzes the circularization of gamma-N-acetyl-alpha,gamma-diaminobutyric acid (ADABA) to ectoine (1,4,5,6-tetrahydro-2-methyl-4-pyrimidine carboxylic acid), which is an excellent osmoprotectant. This Desulfosudis oleivorans (strain DSM 6200 / JCM 39069 / Hxd3) (Desulfococcus oleovorans) protein is L-ectoine synthase.